The following is a 313-amino-acid chain: Ribosomal RNA small subunit methyltransferase H (313 aa).

S-adenosyl-L-methionine-binding positions include 35 to 37 (GGH), Asp-55, Phe-81, Asp-103, and Gln-110.

This sequence belongs to the methyltransferase superfamily. RsmH family.

It is found in the cytoplasm. The enzyme catalyses cytidine(1402) in 16S rRNA + S-adenosyl-L-methionine = N(4)-methylcytidine(1402) in 16S rRNA + S-adenosyl-L-homocysteine + H(+). Functionally, specifically methylates the N4 position of cytidine in position 1402 (C1402) of 16S rRNA. The chain is Ribosomal RNA small subunit methyltransferase H from Pseudomonas paraeruginosa (strain DSM 24068 / PA7) (Pseudomonas aeruginosa (strain PA7)).